A 99-amino-acid chain; its full sequence is Aspartyl/glutamyl-tRNA(Asn/Gln) amidotransferase subunit C (99 aa).

The protein belongs to the GatC family. In terms of assembly, heterotrimer of A, B and C subunits.

The catalysed reaction is L-glutamyl-tRNA(Gln) + L-glutamine + ATP + H2O = L-glutaminyl-tRNA(Gln) + L-glutamate + ADP + phosphate + H(+). It carries out the reaction L-aspartyl-tRNA(Asn) + L-glutamine + ATP + H2O = L-asparaginyl-tRNA(Asn) + L-glutamate + ADP + phosphate + 2 H(+). Functionally, allows the formation of correctly charged Asn-tRNA(Asn) or Gln-tRNA(Gln) through the transamidation of misacylated Asp-tRNA(Asn) or Glu-tRNA(Gln) in organisms which lack either or both of asparaginyl-tRNA or glutaminyl-tRNA synthetases. The reaction takes place in the presence of glutamine and ATP through an activated phospho-Asp-tRNA(Asn) or phospho-Glu-tRNA(Gln). This is Aspartyl/glutamyl-tRNA(Asn/Gln) amidotransferase subunit C from Cupriavidus necator (strain ATCC 17699 / DSM 428 / KCTC 22496 / NCIMB 10442 / H16 / Stanier 337) (Ralstonia eutropha).